The following is a 221-amino-acid chain: MKTITTDWELIPYSEAWSRQTEWFDALVHAKQNGESYENRIIFCEHPHVYTLGRSGKENNMLLGEEQLKTIGATLYHIDRGGDITYHGPGQLVCYPILNLEEFGLGLKEYVHLLEEAVIRVCASYGVVAGRLEKATGVWLEGDTSRARKICAIGVRSSHYVTMHGLALNVNTDLRYFSYIHPCGFIDKGVTSLQQELGHSIDMAEVKERLGRELLAALLSK.

The 187-residue stretch at 35 to 221 (ESYENRIIFC…RELLAALLSK (187 aa)) folds into the BPL/LPL catalytic domain. Residues 80–87 (RGGDITYH), 152–154 (AIG), and 165–167 (GLA) contribute to the substrate site. Cysteine 183 acts as the Acyl-thioester intermediate in catalysis.

Belongs to the LipB family.

The protein localises to the cytoplasm. The enzyme catalyses octanoyl-[ACP] + L-lysyl-[protein] = N(6)-octanoyl-L-lysyl-[protein] + holo-[ACP] + H(+). The protein operates within protein modification; protein lipoylation via endogenous pathway; protein N(6)-(lipoyl)lysine from octanoyl-[acyl-carrier-protein]: step 1/2. In terms of biological role, catalyzes the transfer of endogenously produced octanoic acid from octanoyl-acyl-carrier-protein onto the lipoyl domains of lipoate-dependent enzymes. Lipoyl-ACP can also act as a substrate although octanoyl-ACP is likely to be the physiological substrate. This Bacteroides fragilis (strain ATCC 25285 / DSM 2151 / CCUG 4856 / JCM 11019 / LMG 10263 / NCTC 9343 / Onslow / VPI 2553 / EN-2) protein is Octanoyltransferase.